Consider the following 580-residue polypeptide: Fumarate hydratase class I, aerobic (580 aa).

[4Fe-4S] cluster is bound by residues Cys105, Cys224, and Cys318.

Belongs to the class-I fumarase family. As to quaternary structure, homodimer. The cofactor is [4Fe-4S] cluster.

The catalysed reaction is (S)-malate = fumarate + H2O. It catalyses the reaction oxaloacetate = enol-oxaloacetate. The protein operates within carbohydrate metabolism; tricarboxylic acid cycle; (S)-malate from fumarate: step 1/1. Functionally, catalyzes the reversible hydration of fumarate to (S)-malate. Functions as an aerobic enzyme in the direction of malate formation as part of the citric acid cycle. Accounts for about 80% of the fumarase activity when the bacteria grow aerobically. To a lesser extent, also displays D-tartrate dehydratase activity in vitro, but is not able to convert (R)-malate, L-tartrate or meso-tartrate. Can also catalyze the isomerization of enol- to keto-oxaloacetate. This is Fumarate hydratase class I, aerobic from Salmonella typhimurium (strain LT2 / SGSC1412 / ATCC 700720).